A 72-amino-acid polypeptide reads, in one-letter code: UPF0270 protein KPK_0377 (72 aa).

It belongs to the UPF0270 family.

The chain is UPF0270 protein KPK_0377 from Klebsiella pneumoniae (strain 342).